Reading from the N-terminus, the 330-residue chain is Peptide transport system ATP-binding protein SapD (330 aa).

The ABC transporter domain occupies 6–259 (IRNLTIEFKT…PHHPYTQALI (254 aa)). Position 40–47 (40–47 (GESGSGKS)) interacts with ATP.

This sequence belongs to the ABC transporter superfamily.

The protein localises to the cell inner membrane. Involved in a peptide intake transport system that plays a role in the resistance to antimicrobial peptides. This is Peptide transport system ATP-binding protein SapD (sapD) from Escherichia coli O157:H7.